Here is a 585-residue protein sequence, read N- to C-terminus: Mitochondrial sodium/calcium exchanger protein (585 aa).

The N-terminal stretch at 1 to 26 is a signal peptide; the sequence is MAGRWLDPLWAPGFLCVALILETASG. Topologically, residues 27–95 are extracellular; that stretch reads AGDLSTKAHG…GIFCYFPPNL (69 aa). N-linked (GlcNAc...) asparagine glycosylation is present at Asn46. The helical transmembrane segment at 96–116 threads the bilayer; sequence LPLAITLYVFWLLYLFLILGV. Residues 117 to 140 are Cytoplasmic-facing; the sequence is TAAKFFCPNLSAISTSLKLSHNVA. The chain crosses the membrane as a helical span at residues 141–161; the sequence is GVTFLAFGNGAPDIFSALVAF. The Extracellular segment spans residues 162–168; the sequence is SDPRTAG. A helical membrane pass occupies residues 169-189; the sequence is LAIGALFGAGVLVTTVVAGGI. The Cytoplasmic portion of the chain corresponds to 190-205; sequence TILRPFMAASRPFLRD. The helical transmembrane segment at 206-226 threads the bilayer; it reads ITFYMVAVFLTFTALYLGRIT. Position 227 (Leu227) is a topological domain, extracellular. A helical transmembrane segment spans residues 228-247; that stretch reads VWALGYLGLYVFYVVTVIIC. Residues 248–325 lie on the Cytoplasmic side of the membrane; it reads TWVYQRQRSR…KWRTQSISCK (78 aa). Ser258 bears the Phosphoserine; by PKA mark. The helical transmembrane segment at 326 to 346 threads the bilayer; that stretch reads LLKVAKLPVEFLLLLTVPVVD. At 347–360 the chain is on the extracellular side; the sequence is PDKDDRNWKRPLNC. A helical membrane pass occupies residues 361 to 381; that stretch reads LQLVISPLVLVLTLQSGVYGI. Residues 382 to 383 are Cytoplasmic-facing; it reads YE. Residues 384–404 traverse the membrane as a helical segment; it reads IGGLLPVWAVVVIVGTALASV. The Extracellular portion of the chain corresponds to 405–416; the sequence is TFFATSNSEPPR. The chain crosses the membrane as a helical span at residues 417–437; sequence LHWLFAFLGFLTSALWINAAA. At 438-445 the chain is on the cytoplasmic side; sequence TEVVNILR. A helical membrane pass occupies residues 446–466; that stretch reads SLGVVFRLSNTVLGLTLLAWG. Residues 467-491 are Extracellular-facing; the sequence is NSIGDAFSDFTLARQGYPRMAFSAC. The helical transmembrane segment at 492–512 threads the bilayer; the sequence is FGGIIFNILVGVGLGCLLQIV. Residues 513-525 lie on the Cytoplasmic side of the membrane; sequence RSHASEVKLEPDG. Residues 526 to 546 traverse the membrane as a helical segment; sequence LLVWVLASALGLSLVFSLVSV. The Extracellular segment spans residues 547-559; it reads PLQCFQLSKAYGL. Residues 560-580 form a helical membrane-spanning segment; sequence CLLLFYICFIVVVLLTEFGVI. The Cytoplasmic segment spans residues 581–585; sequence HLKAD.

Belongs to the Ca(2+):cation antiporter (CaCA) (TC 2.A.19) family. SLC24A subfamily. In terms of processing, phosphorylation at Ser-258 by PKA prevents calcium overload. As to expression, widely expressed. Present at higher level in pancreas, stomach, skeletal muscle and skin (at protein level). Ubiquitously expressed.

Its subcellular location is the mitochondrion inner membrane. It carries out the reaction Ca(2+)(in) + 3 Na(+)(out) = Ca(2+)(out) + 3 Na(+)(in). The catalysed reaction is 3 Li(+)(out) + Ca(2+)(in) = 3 Li(+)(in) + Ca(2+)(out). Its activity is regulated as follows. Inhibited by the sodium/calcium exchanger inhibitor CGP-37157. Strongly inhibited by zinc. In terms of biological role, mitochondrial sodium/calcium antiporter that mediates sodium-dependent calcium efflux from mitochondrion, by mediating the exchange of 3 sodium ions per 1 calcium ion. Plays a central role in mitochondrial calcium homeostasis by mediating mitochondrial calcium extrusion: calcium efflux is essential for mitochondrial function and cell survival, notably in cardiomyocytes. Regulates rates of glucose-dependent insulin secretion in pancreatic beta-cells during the first phase of insulin secretion: acts by mediating efflux of calcium from mitochondrion, thereby affecting cytoplasmic calcium responses. Required for store-operated Ca(2+) entry (SOCE) and Ca(2+) release-activated Ca(2+) (CRAC) channel regulation: sodium transport by SLC8B1 leads to promote calcium-shuttling that modulates mitochondrial redox status, thereby regulating SOCE activity. Involved in B-lymphocyte chemotaxis. Able to transport Ca(2+) in exchange of either Li(+) or Na(+), explaining how Li(+) catalyzes Ca(2+) exchange. In contrast to other members of the family its function is independent of K(+). The sequence is that of Mitochondrial sodium/calcium exchanger protein from Rattus norvegicus (Rat).